The sequence spans 554 residues: CTP synthase (554 aa).

Residues 1–265 (MTPLIFVTGG…DEIVIDQFKL (265 aa)) form an amidoligase domain region. Ser-13 contributes to the CTP binding site. UTP is bound at residue Ser-13. ATP-binding positions include 14-19 (SLGKGI) and Asp-71. Mg(2+)-binding residues include Asp-71 and Glu-139. CTP is bound by residues 146-148 (DIE), 186-191 (KTKPTQ), and Lys-222. UTP contacts are provided by residues 186-191 (KTKPTQ) and Lys-222. A Glutamine amidotransferase type-1 domain is found at 292–545 (TIAVVGKYVD…VKASRARKAG (254 aa)). Gly-353 lines the L-glutamine pocket. Cys-380 (nucleophile; for glutamine hydrolysis) is an active-site residue. L-glutamine-binding positions include 381-384 (YGMQ), Glu-404, and Arg-471. Active-site residues include His-518 and Glu-520.

It belongs to the CTP synthase family. As to quaternary structure, homotetramer.

It carries out the reaction UTP + L-glutamine + ATP + H2O = CTP + L-glutamate + ADP + phosphate + 2 H(+). It catalyses the reaction L-glutamine + H2O = L-glutamate + NH4(+). The enzyme catalyses UTP + NH4(+) + ATP = CTP + ADP + phosphate + 2 H(+). It functions in the pathway pyrimidine metabolism; CTP biosynthesis via de novo pathway; CTP from UDP: step 2/2. Allosterically activated by GTP, when glutamine is the substrate; GTP has no effect on the reaction when ammonia is the substrate. The allosteric effector GTP functions by stabilizing the protein conformation that binds the tetrahedral intermediate(s) formed during glutamine hydrolysis. Inhibited by the product CTP, via allosteric rather than competitive inhibition. In terms of biological role, catalyzes the ATP-dependent amination of UTP to CTP with either L-glutamine or ammonia as the source of nitrogen. Regulates intracellular CTP levels through interactions with the four ribonucleotide triphosphates. In Xylella fastidiosa (strain M12), this protein is CTP synthase.